A 163-amino-acid chain; its full sequence is Protein-export protein SecB (163 aa).

The protein belongs to the SecB family. Homotetramer, a dimer of dimers. One homotetramer interacts with 1 SecA dimer.

It localises to the cytoplasm. Functionally, one of the proteins required for the normal export of preproteins out of the cell cytoplasm. It is a molecular chaperone that binds to a subset of precursor proteins, maintaining them in a translocation-competent state. It also specifically binds to its receptor SecA. The polypeptide is Protein-export protein SecB (Pseudomonas aeruginosa (strain LESB58)).